We begin with the raw amino-acid sequence, 491 residues long: Ketol-acid reductoisomerase (NADP(+)) (491 aa).

The 192-residue stretch at 16 to 207 (IKKCRFMKEN…GGHRAGVLES (192 aa)) folds into the KARI N-terminal Rossmann domain. NADP(+) is bound by residues 44-47 (CGSQ), Lys-67, Ser-77, and 107-109 (DKQ). The active site involves His-131. An NADP(+)-binding site is contributed by Gly-157. KARI C-terminal knotted domains lie at 208–344 (SFIA…NILS) and 345–484 (YSEK…MKEM). Asp-216, Glu-220, Glu-389, and Glu-393 together coordinate Mg(2+). Ser-414 is a binding site for substrate.

Belongs to the ketol-acid reductoisomerase family. It depends on Mg(2+) as a cofactor.

It catalyses the reaction (2R)-2,3-dihydroxy-3-methylbutanoate + NADP(+) = (2S)-2-acetolactate + NADPH + H(+). The catalysed reaction is (2R,3R)-2,3-dihydroxy-3-methylpentanoate + NADP(+) = (S)-2-ethyl-2-hydroxy-3-oxobutanoate + NADPH + H(+). It functions in the pathway amino-acid biosynthesis; L-isoleucine biosynthesis; L-isoleucine from 2-oxobutanoate: step 2/4. It participates in amino-acid biosynthesis; L-valine biosynthesis; L-valine from pyruvate: step 2/4. In terms of biological role, involved in the biosynthesis of branched-chain amino acids (BCAA). Catalyzes an alkyl-migration followed by a ketol-acid reduction of (S)-2-acetolactate (S2AL) to yield (R)-2,3-dihydroxy-isovalerate. In the isomerase reaction, S2AL is rearranged via a Mg-dependent methyl migration to produce 3-hydroxy-3-methyl-2-ketobutyrate (HMKB). In the reductase reaction, this 2-ketoacid undergoes a metal-dependent reduction by NADPH to yield (R)-2,3-dihydroxy-isovalerate. The chain is Ketol-acid reductoisomerase (NADP(+)) from Buchnera aphidicola subsp. Schizaphis graminum (strain Sg).